Consider the following 384-residue polypeptide: DNA replication and repair protein RecF (384 aa).

An ATP-binding site is contributed by 43-50; sequence GENGSGKT.

The protein belongs to the RecF family.

The protein resides in the cytoplasm. In terms of biological role, the RecF protein is involved in DNA metabolism; it is required for DNA replication and normal SOS inducibility. RecF binds preferentially to single-stranded, linear DNA. It also seems to bind ATP. This is DNA replication and repair protein RecF from Brucella abortus (strain 2308).